The chain runs to 185 residues: Threonylcarbamoyl-AMP synthase (185 aa).

Positions 4–185 (SFRAQCAARV…LVTGQVIRPA (182 aa)) constitute a YrdC-like domain.

Belongs to the SUA5 family. TsaC subfamily.

Its subcellular location is the cytoplasm. The catalysed reaction is L-threonine + hydrogencarbonate + ATP = L-threonylcarbamoyladenylate + diphosphate + H2O. In terms of biological role, required for the formation of a threonylcarbamoyl group on adenosine at position 37 (t(6)A37) in tRNAs that read codons beginning with adenine. Catalyzes the conversion of L-threonine, HCO(3)(-)/CO(2) and ATP to give threonylcarbamoyl-AMP (TC-AMP) as the acyladenylate intermediate, with the release of diphosphate. In Pseudomonas aeruginosa (strain UCBPP-PA14), this protein is Threonylcarbamoyl-AMP synthase.